The sequence spans 131 residues: Profilin-1 (131 aa).

Belongs to the profilin family. Occurs in many kinds of cells as a complex with monomeric actin in a 1:1 ratio. In terms of tissue distribution, cytoplasmic distribution in hypocotyls. In root nodules, it is found in all cells, but is more abundant in the vascular tissue as well as the endodermis.

The protein resides in the cytoplasm. Its subcellular location is the cytoskeleton. In terms of biological role, binds to actin and affects the structure of the cytoskeleton. At high concentrations, profilin prevents the polymerization of actin, whereas it enhances it at low concentrations. By binding to PIP2, it inhibits the formation of IP3 and DG. The chain is Profilin-1 from Phaseolus vulgaris (Kidney bean).